The sequence spans 428 residues: Enolase (428 aa).

Position 163 (Gln-163) interacts with (2R)-2-phosphoglycerate. Glu-205 acts as the Proton donor in catalysis. Positions 242, 286, and 313 each coordinate Mg(2+). Lys-338, Arg-367, Ser-368, and Lys-389 together coordinate (2R)-2-phosphoglycerate. The active-site Proton acceptor is Lys-338.

The protein belongs to the enolase family. Mg(2+) is required as a cofactor.

It localises to the cytoplasm. It is found in the secreted. The protein localises to the cell surface. The catalysed reaction is (2R)-2-phosphoglycerate = phosphoenolpyruvate + H2O. Its pathway is carbohydrate degradation; glycolysis; pyruvate from D-glyceraldehyde 3-phosphate: step 4/5. Functionally, catalyzes the reversible conversion of 2-phosphoglycerate (2-PG) into phosphoenolpyruvate (PEP). It is essential for the degradation of carbohydrates via glycolysis. The protein is Enolase of Lactobacillus helveticus (strain DPC 4571).